A 259-amino-acid chain; its full sequence is Hydroxyethylthiazole kinase (259 aa).

Methionine 50 is a substrate binding site. The ATP site is built by arginine 122 and threonine 168. Glycine 195 contributes to the substrate binding site.

It belongs to the Thz kinase family. It depends on Mg(2+) as a cofactor.

The enzyme catalyses 5-(2-hydroxyethyl)-4-methylthiazole + ATP = 4-methyl-5-(2-phosphooxyethyl)-thiazole + ADP + H(+). The protein operates within cofactor biosynthesis; thiamine diphosphate biosynthesis; 4-methyl-5-(2-phosphoethyl)-thiazole from 5-(2-hydroxyethyl)-4-methylthiazole: step 1/1. In terms of biological role, catalyzes the phosphorylation of the hydroxyl group of 4-methyl-5-beta-hydroxyethylthiazole (THZ). This is Hydroxyethylthiazole kinase from Escherichia coli O127:H6 (strain E2348/69 / EPEC).